The chain runs to 137 residues: Probable 4-amino-4-deoxy-L-arabinose-phosphoundecaprenol flippase subunit ArnF (137 aa).

Residues 1-5 are Cytoplasmic-facing; it reads MSRAR. A helical transmembrane segment spans residues 6 to 26; sequence GFAFALGSVALVSGAQLGMRW. Residues 27–49 are Periplasmic-facing; sequence SMTRLPAPDQWLPALSAGSVDLA. Residues 50-70 traverse the membrane as a helical segment; that stretch reads ALAVVAAAIAAYALSMLCWLL. Topologically, residues 71–80 are cytoplasmic; sequence ALRDLPLGRA. A helical membrane pass occupies residues 81 to 101; sequence YSLLSISYALVYLLAASLPLF. N102 is a topological domain (periplasmic). The helical transmembrane segment at 103–123 threads the bilayer; sequence EPFTLSKTLGVALVILGVITI. The Cytoplasmic segment spans residues 124–137; sequence NSRSAPATSPRNTP.

It belongs to the ArnF family. As to quaternary structure, heterodimer of ArnE and ArnF.

It localises to the cell inner membrane. It participates in bacterial outer membrane biogenesis; lipopolysaccharide biosynthesis. Functionally, translocates 4-amino-4-deoxy-L-arabinose-phosphoundecaprenol (alpha-L-Ara4N-phosphoundecaprenol) from the cytoplasmic to the periplasmic side of the inner membrane. The polypeptide is Probable 4-amino-4-deoxy-L-arabinose-phosphoundecaprenol flippase subunit ArnF (Pseudomonas fluorescens (strain ATCC BAA-477 / NRRL B-23932 / Pf-5)).